Consider the following 130-residue polypeptide: Small ribosomal subunit protein uS8 (130 aa).

It belongs to the universal ribosomal protein uS8 family. As to quaternary structure, part of the 30S ribosomal subunit. Contacts proteins S5 and S12.

Its function is as follows. One of the primary rRNA binding proteins, it binds directly to 16S rRNA central domain where it helps coordinate assembly of the platform of the 30S subunit. In Shewanella pealeana (strain ATCC 700345 / ANG-SQ1), this protein is Small ribosomal subunit protein uS8.